The following is a 315-amino-acid chain: MILLFYTSSFILDCLLGDPYSWPHPIKAIGNLIKWLTIILRKIFHGKSLYFAGGLLFVLTVGMTGAVSWFILFLSAKIAYWLYVAVFVYLGYTTLAMTCLAKEARKIQRTLADGDLAAARVQVGMIVGRDTDKLTAEEISKATIETVAENTADGVIAPLFYLFIGGPVLALMYKAVNTLDSMVGYKNEKYRAIGFVSAKMDDIANFIPARLAWFFLVIASFILRYDGRASWQIGLRDRKNHTSPNCAYPEGAVAGALGITLGGTHEYFGETVVKPTIGSGTKPVSEKEISQTIHLLYMASTIAFIMFASIYLLLF.

The next 5 helical transmembrane spans lie at 54–74, 78–98, 152–172, 203–223, and 295–315; these read GLLF…ILFL, IAYW…LAMT, ADGV…LALM, IANF…SFIL, and LLYM…LLLF.

Belongs to the CobD/CbiB family.

It localises to the cell membrane. The protein operates within cofactor biosynthesis; adenosylcobalamin biosynthesis. Converts cobyric acid to cobinamide by the addition of aminopropanol on the F carboxylic group. The polypeptide is Cobalamin biosynthesis protein CobD (Listeria monocytogenes serovar 1/2a (strain ATCC BAA-679 / EGD-e)).